We begin with the raw amino-acid sequence, 1277 residues long: Y' element ATP-dependent helicase YEL077C (1277 aa).

In terms of domain architecture, Helicase ATP-binding spans 222 to 399 (EIYMADTPSV…LQRIGLTGLA (178 aa)). Residue 235-242 (APPGYGKT) participates in ATP binding. The DEAH box signature appears at 345-348 (DEFH). The Helicase C-terminal domain occupies 454 to 605 (ALKLLLALFE…EFYGLESKKG (152 aa)). Disordered regions lie at residues 696–763 (NVRT…NATT) and 775–895 (TTKS…NRFH). Residues 775 to 878 (TTKSINSSTN…ATTTESTNAS (104 aa)) are compositionally biased toward low complexity. Basic and acidic residues predominate over residues 879–895 (AKEDANKDGNAEDNRFH).

Belongs to the helicase family. Yeast subtelomeric Y' repeat subfamily.

Its function is as follows. Catalyzes DNA unwinding and is involved in telomerase-independent telomere maintenance. This Saccharomyces cerevisiae (strain ATCC 204508 / S288c) (Baker's yeast) protein is Y' element ATP-dependent helicase YEL077C.